The following is a 144-amino-acid chain: 6-pyruvoyl tetrahydrobiopterin synthase (144 aa).

The propeptide occupies methionine 1 to alanine 4. Serine 18 is subject to Phosphoserine. Histidine 23 lines the Zn(2+) pocket. The residue at position 27 (serine 27) is a Phosphoserine. Catalysis depends on cysteine 42, which acts as the Proton acceptor. 2 residues coordinate Zn(2+): histidine 48 and histidine 50. The active-site Charge relay system is the histidine 89. At tyrosine 127 the chain carries Phosphotyrosine. The active-site Charge relay system is glutamate 133.

Belongs to the PTPS family. As to quaternary structure, homohexamer formed of two homotrimers in a head to head fashion. Zn(2+) serves as cofactor. In terms of processing, phosphorylation of Ser-18 is required for maximal enzyme activity.

The enzyme catalyses 7,8-dihydroneopterin 3'-triphosphate = 6-pyruvoyl-5,6,7,8-tetrahydropterin + triphosphate + H(+). It functions in the pathway cofactor biosynthesis; tetrahydrobiopterin biosynthesis; tetrahydrobiopterin from 7,8-dihydroneopterin triphosphate: step 1/3. Involved in the biosynthesis of tetrahydrobiopterin, an essential cofactor of aromatic amino acid hydroxylases. Catalyzes the transformation of 7,8-dihydroneopterin triphosphate into 6-pyruvoyl tetrahydropterin. The protein is 6-pyruvoyl tetrahydrobiopterin synthase (Pts) of Rattus norvegicus (Rat).